A 485-amino-acid polypeptide reads, in one-letter code: UDP-N-acetylmuramoyl-L-alanyl-D-glutamate--2,6-diaminopimelate ligase (485 aa).

S30 is a binding site for UDP-N-acetyl-alpha-D-muramoyl-L-alanyl-D-glutamate. 111–117 (GTNGKTT) serves as a coordination point for ATP. UDP-N-acetyl-alpha-D-muramoyl-L-alanyl-D-glutamate contacts are provided by residues 153-154 (TT), S180, Q186, and R188. K220 is modified (N6-carboxylysine). Meso-2,6-diaminopimelate-binding positions include R378, 402–405 (DNPR), G455, and E459. The Meso-diaminopimelate recognition motif signature appears at 402–405 (DNPR).

This sequence belongs to the MurCDEF family. MurE subfamily. Mg(2+) serves as cofactor. In terms of processing, carboxylation is probably crucial for Mg(2+) binding and, consequently, for the gamma-phosphate positioning of ATP.

The protein localises to the cytoplasm. It carries out the reaction UDP-N-acetyl-alpha-D-muramoyl-L-alanyl-D-glutamate + meso-2,6-diaminopimelate + ATP = UDP-N-acetyl-alpha-D-muramoyl-L-alanyl-gamma-D-glutamyl-meso-2,6-diaminopimelate + ADP + phosphate + H(+). The protein operates within cell wall biogenesis; peptidoglycan biosynthesis. In terms of biological role, catalyzes the addition of meso-diaminopimelic acid to the nucleotide precursor UDP-N-acetylmuramoyl-L-alanyl-D-glutamate (UMAG) in the biosynthesis of bacterial cell-wall peptidoglycan. The sequence is that of UDP-N-acetylmuramoyl-L-alanyl-D-glutamate--2,6-diaminopimelate ligase from Bacteroides fragilis (strain ATCC 25285 / DSM 2151 / CCUG 4856 / JCM 11019 / LMG 10263 / NCTC 9343 / Onslow / VPI 2553 / EN-2).